We begin with the raw amino-acid sequence, 1947 residues long: DNA-directed RNA polymerase subunit beta' (1947 aa).

Residues Cys-119, Cys-121, Cys-141, and Cys-144 each contribute to the Zn(2+) site. Mg(2+) is bound by residues Asp-1778, Asp-1780, and Asp-1782.

The protein belongs to the RNA polymerase beta' chain family. RpoC1 subfamily. In terms of assembly, in plastids the minimal PEP RNA polymerase catalytic core is composed of four subunits: alpha, beta, beta', and beta''. When a (nuclear-encoded) sigma factor is associated with the core the holoenzyme is formed, which can initiate transcription. Requires Mg(2+) as cofactor. It depends on Zn(2+) as a cofactor.

The protein resides in the plastid. It localises to the chloroplast. The enzyme catalyses RNA(n) + a ribonucleoside 5'-triphosphate = RNA(n+1) + diphosphate. Its function is as follows. DNA-dependent RNA polymerase catalyzes the transcription of DNA into RNA using the four ribonucleoside triphosphates as substrates. In Oedogonium cardiacum (Filamentous green alga), this protein is DNA-directed RNA polymerase subunit beta'.